Reading from the N-terminus, the 198-residue chain is uncharacterized protein (198 aa).

It is found in the plastid. Its subcellular location is the chloroplast. This is an uncharacterized protein from Antithamnion sp. (Red alga).